The sequence spans 137 residues: MGLLSEFKAFAVKGNVVDMAVGIIIGAAFGKIVSSFVGDVIMPPIGLLIGGVDFSDLAITLKAAEGDVPAVVLAYGKFIQTILDFVIVAFAIFMGVKAINRLKREEAVAPSEPPVPSAEETLLTEIRDLLKAQQNKS.

2 consecutive transmembrane segments (helical) span residues 9–29 (AFAV…GAAF) and 79–99 (IQTI…VKAI).

This sequence belongs to the MscL family. In terms of assembly, homopentamer.

It localises to the cell inner membrane. In terms of biological role, channel that opens in response to stretch forces in the membrane lipid bilayer. May participate in the regulation of osmotic pressure changes within the cell. The protein is Large-conductance mechanosensitive channel of Pseudomonas aeruginosa (strain UCBPP-PA14).